We begin with the raw amino-acid sequence, 706 residues long: Polyribonucleotide nucleotidyltransferase (706 aa).

Mg(2+) is bound by residues Asp487 and Asp493. Positions 553-612 (PRLFTMKISQDKIRDVIGKGGETIRSITAETGTEINIAEDGTITIAATTQEAGDAAKKRI) constitute a KH domain. The S1 motif domain maps to 622–692 (GKVYEGTVVK…DRGRVRLSIK (71 aa)).

The protein belongs to the polyribonucleotide nucleotidyltransferase family. Requires Mg(2+) as cofactor.

It is found in the cytoplasm. The enzyme catalyses RNA(n+1) + phosphate = RNA(n) + a ribonucleoside 5'-diphosphate. Functionally, involved in mRNA degradation. Catalyzes the phosphorolysis of single-stranded polyribonucleotides processively in the 3'- to 5'-direction. This Neisseria gonorrhoeae (strain ATCC 700825 / FA 1090) protein is Polyribonucleotide nucleotidyltransferase.